Here is a 234-residue protein sequence, read N- to C-terminus: Enterobactin synthase component D (234 aa).

Mg(2+) is bound by residues aspartate 107, glutamate 109, and glutamate 152.

This sequence belongs to the P-Pant transferase superfamily. EntD family. As to quaternary structure, entB, EntD, EntE, and EntF form a multienzyme complex called enterobactin synthase. Mg(2+) is required as a cofactor.

The protein resides in the membrane. It catalyses the reaction apo-[aryl-carrier protein] + CoA = holo-[aryl-carrier protein] + adenosine 3',5'-bisphosphate + H(+). The catalysed reaction is apo-[peptidyl-carrier protein] + CoA = holo-[peptidyl-carrier protein] + adenosine 3',5'-bisphosphate + H(+). The protein operates within siderophore biosynthesis; enterobactin biosynthesis. Involved in the biosynthesis of the siderophore enterobactin (enterochelin), which is a macrocyclic trimeric lactone of N-(2,3-dihydroxybenzoyl)-serine. The serine trilactone serves as a scaffolding for the three catechol functionalities that provide hexadentate coordination for the tightly ligated iron(2+) atoms. Plays an essential role in the assembly of the enterobactin by catalyzing the transfer of the 4'-phosphopantetheine (Ppant) moiety from coenzyme A to the apo-domains of both EntB (ArCP domain) and EntF (PCP domain) to yield their holo-forms which make them competent for the activation of 2,3-dihydroxybenzoate (DHB) and L-serine, respectively. This chain is Enterobactin synthase component D, found in Salmonella typhi.